The sequence spans 96 residues: Aspartyl/glutamyl-tRNA(Asn/Gln) amidotransferase subunit C (96 aa).

The protein belongs to the GatC family. In terms of assembly, heterotrimer of A, B and C subunits.

It catalyses the reaction L-glutamyl-tRNA(Gln) + L-glutamine + ATP + H2O = L-glutaminyl-tRNA(Gln) + L-glutamate + ADP + phosphate + H(+). The catalysed reaction is L-aspartyl-tRNA(Asn) + L-glutamine + ATP + H2O = L-asparaginyl-tRNA(Asn) + L-glutamate + ADP + phosphate + 2 H(+). Its function is as follows. Allows the formation of correctly charged Asn-tRNA(Asn) or Gln-tRNA(Gln) through the transamidation of misacylated Asp-tRNA(Asn) or Glu-tRNA(Gln) in organisms which lack either or both of asparaginyl-tRNA or glutaminyl-tRNA synthetases. The reaction takes place in the presence of glutamine and ATP through an activated phospho-Asp-tRNA(Asn) or phospho-Glu-tRNA(Gln). This is Aspartyl/glutamyl-tRNA(Asn/Gln) amidotransferase subunit C from Sulfurovum sp. (strain NBC37-1).